Reading from the N-terminus, the 775-residue chain is Serine/threonine-protein kinase ppk6 (775 aa).

Serine 132 and serine 134 each carry phosphoserine. In terms of domain architecture, Protein kinase spans 503–758 (YTTIKELGIG…IEETLQHHWF (256 aa)). ATP is bound by residues 509-517 (LGIGAYGQV) and lysine 533. Catalysis depends on aspartate 636, which acts as the Proton acceptor.

It belongs to the protein kinase superfamily. Ser/Thr protein kinase family.

The protein localises to the cytoplasm. It localises to the nucleus. The catalysed reaction is L-seryl-[protein] + ATP = O-phospho-L-seryl-[protein] + ADP + H(+). The enzyme catalyses L-threonyl-[protein] + ATP = O-phospho-L-threonyl-[protein] + ADP + H(+). This Schizosaccharomyces pombe (strain 972 / ATCC 24843) (Fission yeast) protein is Serine/threonine-protein kinase ppk6 (ppk6).